An 882-amino-acid chain; its full sequence is Formin-like protein 9 (882 aa).

Residues 1-19 form the signal peptide; sequence MGMAMRCVLVLFSVSPVLL. Residues 67 to 92 form a disordered region; that stretch reads SRGRRHKRYSEAPAPAPAPVPAHQAR. A helical transmembrane segment spans residues 138–158; it reads IVALGVVGLCLVVLGVVIAAF. Disordered regions lie at residues 178-202, 293-316, and 401-471; these read RHGS…PDPL, THDS…LSPK, and TMTN…PLPR. A compositionally biased stretch (low complexity) spans 298 to 308; it reads SDSSYQSLSPD. The span at 427 to 441 shows a compositional bias: pro residues; it reads KPAPPPPPQKNPPPN. Residues 462 to 882 form the FH2 domain; it reads VGKDGSPLPR…QTLNLVLPLK (421 aa).

It belongs to the formin-like family. Class-I subfamily.

It is found in the membrane. The sequence is that of Formin-like protein 9 (FH9) from Oryza sativa subsp. japonica (Rice).